A 786-amino-acid polypeptide reads, in one-letter code: MNKKVLKTLEYDKVKQNLYAFTTTSMGKRLIDKLEPSSDYDEISNSLAQTKDGADILRIKGGIPVPNLISIKSFLKRLDIGGTLNSKELAAIGRVLRATNEVNRFFKDLADNKIKLEVLFDDVAKLESLPEISKKLLVSIENDGHVTDDASTLLKSIRQQISVTEETIRERLNAYTRGTNSKYLSNAVVTIRNERYVLPVKQEYRSKFGGIVHDQSSSGQTLFVEPAVIVELNNRLRQQQVAEREEINRILEELSKELAPYTHELNNNAKILGMLDFINAKAKYAHSIKATEPILSKENDVYLRQVWHPLLDMKKAVKNDIMIGKDYQAIVITGPNTGGKTITLKTLGLVQLMGQSGLYIPAFEESRIGIFDDIFADIGDEQSIEQSLSTFSSHMTNIVEILKGIDEKSLVLFDELGAGTDPQEGAALAISILDAVGAKGSYVVATTHYPELKAYGFERPNTINASMEFDANTLQPTYRLLIGIPGRSNAFDISQRLGLDKMIVMAARQLTSQDSQDLNEMISDLVAKRHDAEEKEIMYRKYLREAEELHHDLETNFHQFERQKENMLEQAKERANQIVEETKKKSDELISELRKMKMSAASNIEEGSLIDAQGRVNALHQETNLKKNKVLRKAKQQQELHPNDDVMVNSYGQRGVLLRKAGNHAWEVQLGILKMKIDESDLEKIKVKDTQPKRAGAVLKSSSSSHVSPTLDLRGERYENAMVKVDRYIDAAVLAGYNSVTIIHGKGTGALRTGIINYLKQNKAVKNFEFASPNNGGNGATVVYFK.

334-341 (GPNTGGKT) provides a ligand contact to ATP. The Smr domain occupies 711–786 (LDLRGERYEN…GNGATVVYFK (76 aa)).

It belongs to the DNA mismatch repair MutS family. MutS2 subfamily. In terms of assembly, homodimer. Binds to stalled ribosomes, contacting rRNA.

Functionally, endonuclease that is involved in the suppression of homologous recombination and thus may have a key role in the control of bacterial genetic diversity. Its function is as follows. Acts as a ribosome collision sensor, splitting the ribosome into its 2 subunits. Detects stalled/collided 70S ribosomes which it binds and splits by an ATP-hydrolysis driven conformational change. Acts upstream of the ribosome quality control system (RQC), a ribosome-associated complex that mediates the extraction of incompletely synthesized nascent chains from stalled ribosomes and their subsequent degradation. Probably generates substrates for RQC. The protein is Endonuclease MutS2 of Ligilactobacillus salivarius (strain UCC118) (Lactobacillus salivarius).